Consider the following 203-residue polypeptide: Pyridoxine/pyridoxamine 5'-phosphate oxidase (203 aa).

FMN contacts are provided by residues 50-55 (RMVLLK), 65-66 (YT), K71, K72, and Q94. K55 provides a ligand contact to substrate. Residues Y112, R116, and S120 each coordinate substrate. Residues 129 to 130 (QS) and W174 contribute to the FMN site. 180–182 (RLH) is a binding site for substrate. R184 serves as a coordination point for FMN.

It belongs to the pyridoxamine 5'-phosphate oxidase family. As to quaternary structure, homodimer. The cofactor is FMN.

The enzyme catalyses pyridoxamine 5'-phosphate + O2 + H2O = pyridoxal 5'-phosphate + H2O2 + NH4(+). It carries out the reaction pyridoxine 5'-phosphate + O2 = pyridoxal 5'-phosphate + H2O2. It functions in the pathway cofactor metabolism; pyridoxal 5'-phosphate salvage; pyridoxal 5'-phosphate from pyridoxamine 5'-phosphate: step 1/1. It participates in cofactor metabolism; pyridoxal 5'-phosphate salvage; pyridoxal 5'-phosphate from pyridoxine 5'-phosphate: step 1/1. Its function is as follows. Catalyzes the oxidation of either pyridoxine 5'-phosphate (PNP) or pyridoxamine 5'-phosphate (PMP) into pyridoxal 5'-phosphate (PLP). The sequence is that of Pyridoxine/pyridoxamine 5'-phosphate oxidase from Brucella canis (strain ATCC 23365 / NCTC 10854 / RM-666).